A 319-amino-acid polypeptide reads, in one-letter code: Aspartate carbamoyltransferase catalytic subunit (319 aa).

Positions 64 and 65 each coordinate carbamoyl phosphate. Lys-92 contacts L-aspartate. 3 residues coordinate carbamoyl phosphate: Arg-114, His-142, and Gln-145. 2 residues coordinate L-aspartate: Arg-175 and Arg-229. Residues Gly-270 and Pro-271 each contribute to the carbamoyl phosphate site.

It belongs to the aspartate/ornithine carbamoyltransferase superfamily. ATCase family. Heterododecamer (2C3:3R2) of six catalytic PyrB chains organized as two trimers (C3), and six regulatory PyrI chains organized as three dimers (R2).

It carries out the reaction carbamoyl phosphate + L-aspartate = N-carbamoyl-L-aspartate + phosphate + H(+). The protein operates within pyrimidine metabolism; UMP biosynthesis via de novo pathway; (S)-dihydroorotate from bicarbonate: step 2/3. Catalyzes the condensation of carbamoyl phosphate and aspartate to form carbamoyl aspartate and inorganic phosphate, the committed step in the de novo pyrimidine nucleotide biosynthesis pathway. The chain is Aspartate carbamoyltransferase catalytic subunit from Rhodospirillum rubrum (strain ATCC 11170 / ATH 1.1.1 / DSM 467 / LMG 4362 / NCIMB 8255 / S1).